We begin with the raw amino-acid sequence, 323 residues long: Mas-related G-protein coupled receptor member X1 (323 aa).

Residues 1 to 30 (MDPTISSLSTESTTLNKTGHPSCRPILTLS) lie on the Extracellular side of the membrane. Asn-16 carries N-linked (GlcNAc...) asparagine glycosylation. The helical transmembrane segment at 31–51 (FLVPIITLLGLAGNTIVLWLL) threads the bilayer. The Cytoplasmic segment spans residues 52 to 59 (GFRMRRKA). Residues 60-80 (ISVYVLNLSLADSFFLCCHFI) traverse the membrane as a helical segment. Residues 81–100 (DSLMRIMNFYGIYAHKLSKE) lie on the Extracellular side of the membrane. A helical membrane pass occupies residues 101–121 (ILGNAAIIPYISGLSILSAIS). Over 122–143 (TERCLSVLWPIWYHCHRPRNMS) the chain is Cytoplasmic. Residues 144 to 164 (AIICVLIWVLSFLMGILDWFF) form a helical membrane-spanning segment. At 165–180 (SGFLGETHHHLWKNVD) the chain is on the extracellular side. Residues 181-201 (FIVTAFLIFLFMLLFGSSLAL) form a helical membrane-spanning segment. Residues 202-226 (LVRILCGSRRKPLSRLYVTISLTVM) lie on the Cytoplasmic side of the membrane. A helical membrane pass occupies residues 227 to 247 (VYLICGLPLGLYLFLLYWFGI). Residues 248-258 (HLHYPFCHIYQ) lie on the Extracellular side of the membrane. A helical transmembrane segment spans residues 259–279 (VTVLLSCVNSSANPIIYFLVG). The Cytoplasmic segment spans residues 280 to 323 (SFRHRKKHRSLKMVLKRALEETPEEDEYTDSHVQKPTEISERRC).

Belongs to the G-protein coupled receptor 1 family. Mas subfamily. As to expression, uniquely localized in a subset of small dorsal root and trigeminal sensory neurons. Associated preferentially with IB4 class of small-diameter somatosensory afferents (also known as nociceptors).

It localises to the cell membrane. Orphan receptor activated by neuropeptides terminating in Arg-Phe or Arg-Phe-amide. Mediates its action by association with G proteins that activate a phosphatidylinositol-calcium second messenger system. Its effect is mediated by G(q) and G(11) proteins. May regulate the function of nociceptive neurons by modulation of pain perception. This chain is Mas-related G-protein coupled receptor member X1 (Mrgprx1), found in Rattus norvegicus (Rat).